The sequence spans 212 residues: Adenylate kinase (212 aa).

10 to 15 is a binding site for ATP; it reads GAGKGT. The interval 30–59 is NMP; sequence STGDMFRAAMANQTEMGRLAKSYIDKGELV. Residues Thr31, Arg36, 57-59, 86-89, and Gln93 contribute to the AMP site; these read ELV and GYPR. Residues 127-159 are LID; it reads GRIINRKTGETFHKVFNPPVDYKEEDYYQREDD. ATP-binding positions include Arg128 and 137–138; that span reads TF. AMP contacts are provided by Arg156 and Arg167. Residue Gln195 participates in ATP binding.

The protein belongs to the adenylate kinase family. As to quaternary structure, monomer.

It is found in the cytoplasm. The enzyme catalyses AMP + ATP = 2 ADP. Its pathway is purine metabolism; AMP biosynthesis via salvage pathway; AMP from ADP: step 1/1. Functionally, catalyzes the reversible transfer of the terminal phosphate group between ATP and AMP. Plays an important role in cellular energy homeostasis and in adenine nucleotide metabolism. The polypeptide is Adenylate kinase (Streptococcus pyogenes serotype M12 (strain MGAS2096)).